A 393-amino-acid polypeptide reads, in one-letter code: Probable xylan O-acetyltransferase 11 (393 aa).

Residues M1–R9 are Cytoplasmic-facing. The helical; Signal-anchor for type II membrane protein transmembrane segment at A10 to A26 threads the bilayer. Topologically, residues Q27–I393 are lumenal. 4 disulfides stabilise this stretch: C45/C96, C67/C132, C76/C368, and C283/C364. Residue N102 is glycosylated (N-linked (GlcNAc...) asparagine). A GDS motif motif is present at residues G119–S121. S121 acts as the Nucleophile in catalysis. N-linked (GlcNAc...) asparagine glycosylation is present at N325. D363 acts as the Proton donor in catalysis. A DXXH motif motif is present at residues D363–H366. H366 serves as the catalytic Proton acceptor.

It belongs to the PC-esterase family. TBL subfamily. Expressed in roots, leaves and stems.

Its subcellular location is the golgi apparatus membrane. Probable xylan acetyltransferase required for 2-O- and 3-O-monoacetylation of xylosyl residues in xylan. Possesses extremely low activity in vitro. The protein is Probable xylan O-acetyltransferase 11 of Oryza sativa subsp. japonica (Rice).